Here is a 308-residue protein sequence, read N- to C-terminus: Pseudouridine-5'-phosphate glycosidase (308 aa).

Glu29 serves as the catalytic Proton donor. Substrate is bound by residues Lys90 and Val110. Asp142 is a Mn(2+) binding site. 144–146 (SSD) serves as a coordination point for substrate. The active-site Nucleophile is Lys163.

Belongs to the pseudouridine-5'-phosphate glycosidase family. Homotrimer. The cofactor is Mn(2+).

It carries out the reaction D-ribose 5-phosphate + uracil = psi-UMP + H2O. Functionally, catalyzes the reversible cleavage of pseudouridine 5'-phosphate (PsiMP) to ribose 5-phosphate and uracil. Functions biologically in the cleavage direction, as part of a pseudouridine degradation pathway. This is Pseudouridine-5'-phosphate glycosidase from Serratia proteamaculans (strain 568).